The sequence spans 134 residues: Pre-histone-like nucleoprotein (134 aa).

Positions 2-23 are excised as a propeptide; sequence AILISPTNNTGWGLGTHKLFGG. Positions 40–62 are disordered; it reads RASWGSKGRRRRQGRARGAPLDP. The short motif at 125–134 is the Nuclear localization signal element; that stretch reads KRKRRVRFRQ.

It belongs to the adenoviridae histone-like nucleoprotein family. As to quaternary structure, interacts with the core-capsid bridging protein; this interaction bridges the virus core to the capsid. Interacts with host NPM1; this interaction might play a role in placing the pre-histone-like nucleoprotein on the viral DNA or regulating viral gene expression. Interacts with host HMGB1; this interaction inhibits host immune response. In terms of processing, cleaved near the N-terminus by the viral protease during virion maturation to form the mature protein.

Its subcellular location is the virion. It localises to the host nucleus. The protein resides in the host nucleolus. Functionally, plays a role in the inhibition of host immune response within the nucleus. Interacts with cellular nucleosomes and immobilizes the host immune danger signal HMGB1 on chromatin. In turn, prevents HMGB1 release out of the cell and thus decreases inflammation. Also plays a role in the wrapping and condensation of the viral DNA. May also promote viral genome import into the nucleus. This is Pre-histone-like nucleoprotein from Canis lupus familiaris (Dog).